Here is a 541-residue protein sequence, read N- to C-terminus: MAGAIIENMSTKKLCIVGGILLVFQIIAFLVGGLIAPGPTTAVSYMSVKCVDARKNHHKTKWFVPWGPNHCDKIRDIEEAIPREIEANDIVFSVHIPLPHMEMSPWFQFMLFILQLDIAFKLNNQIRENAEVSMDVSLAYRDDAFAEWTEMAHERVPRKLKCTFTSPKTPEHEGRYYECDVLPFMEIGSVAHKFYLLNIRLPVNEKKKINVGIGEIKDIRLVGIHQNGGFTKVWFAMKTFLTPSIFIIMVWYWRRITMMSRPPVLLEKVIFALGISMTFINIPVEWFSIGFDWTWMLLFGDIRQGIFYAMLLSFWIIFCGEHMMDQHERNHIAGYWKQVGPIAVGSFCLFIFDMCERGVQLTNPFYSIWTTDIGTELAMAFIIVAGICLCLYFLFLCFMVFQVFRNISGKQSSLPAMSKVRRLHYEGLIFRFKFLMLITLACAAMTVIFFIVSQVTEGHWKWGGVTVQVNSAFFTGIYGMWNLYVFALMFLYAPSHKNYGEDQSNGDLGVHSGEELQLTTTITHVDGPTEIYKLTRKEAQE.

At 1–15 (MAGAIIENMSTKKLC) the chain is on the cytoplasmic side. A helical transmembrane segment spans residues 16-36 (IVGGILLVFQIIAFLVGGLIA). At 37–232 (PGPTTAVSYM…GIHQNGGFTK (196 aa)) the chain is on the lumenal side. Positions 101–232 (MEMSPWFQFM…GIHQNGGFTK (132 aa)) are interaction with Wnt proteins. Residues 233–253 (VWFAMKTFLTPSIFIIMVWYW) form a helical membrane-spanning segment. Over 254-268 (RRITMMSRPPVLLEK) the chain is Cytoplasmic. A helical membrane pass occupies residues 269–289 (VIFALGISMTFINIPVEWFSI). Topologically, residues 290-303 (GFDWTWMLLFGDIR) are lumenal. The helical transmembrane segment at 304-324 (QGIFYAMLLSFWIIFCGEHMM) threads the bilayer. The Cytoplasmic portion of the chain corresponds to 325–331 (DQHERNH). A helical membrane pass occupies residues 332 to 352 (IAGYWKQVGPIAVGSFCLFIF). At 353-380 (DMCERGVQLTNPFYSIWTTDIGTELAMA) the chain is on the lumenal side. The chain crosses the membrane as a helical span at residues 381–401 (FIIVAGICLCLYFLFLCFMVF). The Cytoplasmic segment spans residues 402–431 (QVFRNISGKQSSLPAMSKVRRLHYEGLIFR). The chain crosses the membrane as a helical span at residues 432–452 (FKFLMLITLACAAMTVIFFIV). Residues 453 to 471 (SQVTEGHWKWGGVTVQVNS) lie on the Lumenal side of the membrane. Residues 472 to 492 (AFFTGIYGMWNLYVFALMFLY) traverse the membrane as a helical segment. At 493–541 (APSHKNYGEDQSNGDLGVHSGEELQLTTTITHVDGPTEIYKLTRKEAQE) the chain is on the cytoplasmic side.

The protein belongs to the wntless family. As to quaternary structure, interacts with WNT3A. Interacts with WNT1, WNT3 and WNT5A. N-glycosylated.

It localises to the golgi apparatus membrane. The protein localises to the cytoplasmic vesicle membrane. It is found in the cell membrane. Its subcellular location is the endoplasmic reticulum membrane. The protein resides in the early endosome membrane. In terms of biological role, regulates Wnt proteins sorting and secretion in a feedback regulatory mechanism. This reciprocal interaction plays a key role in the regulation of expression, subcellular location, binding and organelle-specific association of Wnt proteins. Plays also an important role in establishment of the anterior-posterior body axis formation during development. This Homo sapiens (Human) protein is Protein wntless homolog (WLS).